The primary structure comprises 340 residues: tRNA N6-adenosine threonylcarbamoyltransferase (340 aa).

Fe cation is bound by residues His-115 and His-119. Substrate-binding positions include 138–142 (VVSGG), Asp-171, Gly-184, Asp-188, and Asn-278. Asp-306 provides a ligand contact to Fe cation.

The protein belongs to the KAE1 / TsaD family. Fe(2+) serves as cofactor.

The protein resides in the cytoplasm. It carries out the reaction L-threonylcarbamoyladenylate + adenosine(37) in tRNA = N(6)-L-threonylcarbamoyladenosine(37) in tRNA + AMP + H(+). Functionally, required for the formation of a threonylcarbamoyl group on adenosine at position 37 (t(6)A37) in tRNAs that read codons beginning with adenine. Is involved in the transfer of the threonylcarbamoyl moiety of threonylcarbamoyl-AMP (TC-AMP) to the N6 group of A37, together with TsaE and TsaB. TsaD likely plays a direct catalytic role in this reaction. The protein is tRNA N6-adenosine threonylcarbamoyltransferase of Clostridium botulinum (strain 657 / Type Ba4).